The following is a 298-amino-acid chain: Cation-efflux pump FieF (298 aa).

The helical transmembrane segment at 24–44 (LLIKIFAWWYTGSVSILAALV) threads the bilayer. Residues aspartate 45 and aspartate 49 each contribute to the Zn(2+) site. The next 2 membrane-spanning stretches (helical) occupy residues 80–100 (SLAALAQSMFISGSALFLTSI) and 112–132 (PGVGIGVTVIALICTIILVTF). The Zn(2+) site is built by histidine 151 and aspartate 155. 2 helical membrane-spanning segments follow: residues 154–174 (SDVMMNGAILIALGLSWYGWH) and 176–196 (ADALFALGIGIYILYSALRMG).

It belongs to the cation diffusion facilitator (CDF) transporter (TC 2.A.4) family. FieF subfamily. As to quaternary structure, homodimer.

It is found in the cell inner membrane. It carries out the reaction Zn(2+)(in) + H(+)(out) = Zn(2+)(out) + H(+)(in). The catalysed reaction is Cd(2+)(in) + H(+)(out) = Cd(2+)(out) + H(+)(in). The enzyme catalyses Fe(2+)(in) + H(+)(out) = Fe(2+)(out) + H(+)(in). Its function is as follows. Divalent metal cation transporter which exports Zn(2+), Cd(2+) and possibly Fe(2+). May be involved in zinc and iron detoxification by efflux. This is Cation-efflux pump FieF from Salmonella typhi.